The primary structure comprises 245 residues: MSEWSRIAVEFGEQQLNLTELEDFARELAYEGLDPALIIKKLKETGGDDWVKDTKFIIVFALTRGNKIVKASGKMSNSGSKRLMALQEKYGLVERAETRLSITPVRVAQSLPTWTCAAAAALKEYLPVGPAVMNLKVENYPPEMMCMAFGSLIPTAGVSEATTKTLMEAYSLWQDAFTKTINVKMRGASKTEVYNSFRDPLHAAVNSVFFPNDVRVKWLKAKGILGPDGVPSRAAEVAAAAYRNL.

RNA is bound by residues Tyr-30, Lys-67, Arg-106, Arg-186, and Ser-196.

The protein belongs to the phlebovirus nucleocapsid protein family. As to quaternary structure, homodimer. Homohexamer; ring-shaped, necessary to form the nucleocapsid. Homopentamers; opened pentamers in solution. Binds to viral genomic RNA. Interacts with glycoprotein Gn; this interaction allows packaging of nucleocapsids into virions.

It localises to the virion. The protein localises to the host cytoplasm. The protein resides in the host nucleus. Its subcellular location is the host endoplasmic reticulum-Golgi intermediate compartment. It is found in the host Golgi apparatus. In terms of biological role, encapsidates the genomic RNA, protecting it from nucleases. Displays high affinity for single-stranded nucleic acid. The encapsidated genomic RNA is termed the nucleocapsid (NC) or ribonucleoprotein. The ribonucleoprotein has a non-helical structure. Serves as template for viral transcription and replication. After replication, the nucleocapsid is recruited to the host Golgi apparatus by glycoprotein Gn for packaging into virus particles. The polypeptide is Nucleoprotein (NP) (Dabie bandavirus (Severe fever with thrombocytopenia virus)).